Reading from the N-terminus, the 465-residue chain is ATP synthase subunit beta (465 aa).

Residue 152 to 159 (GGAGVGKT) participates in ATP binding.

It belongs to the ATPase alpha/beta chains family. In terms of assembly, F-type ATPases have 2 components, CF(1) - the catalytic core - and CF(0) - the membrane proton channel. CF(1) has five subunits: alpha(3), beta(3), gamma(1), delta(1), epsilon(1). CF(0) has three main subunits: a(1), b(2) and c(9-12). The alpha and beta chains form an alternating ring which encloses part of the gamma chain. CF(1) is attached to CF(0) by a central stalk formed by the gamma and epsilon chains, while a peripheral stalk is formed by the delta and b chains.

Its subcellular location is the cell inner membrane. It catalyses the reaction ATP + H2O + 4 H(+)(in) = ADP + phosphate + 5 H(+)(out). In terms of biological role, produces ATP from ADP in the presence of a proton gradient across the membrane. The catalytic sites are hosted primarily by the beta subunits. This chain is ATP synthase subunit beta, found in Campylobacter concisus (strain 13826).